Consider the following 358-residue polypeptide: Probable RNA methyltransferase MXAN_6459 (358 aa).

The Proton acceptor role is filled by glutamate 92. Residues 99–327 (FDEKYVICVS…PVARRYSGGK (229 aa)) enclose the Radical SAM core domain. The cysteines at positions 106 and 333 are disulfide-linked. Positions 113, 117, and 120 each coordinate [4Fe-4S] cluster. S-adenosyl-L-methionine-binding positions include 160–161 (GE), serine 192, 215–217 (SVT), and aspartate 289. Cysteine 333 serves as the catalytic S-methylcysteine intermediate.

This sequence belongs to the radical SAM superfamily. RlmN family. [4Fe-4S] cluster is required as a cofactor.

Its subcellular location is the cytoplasm. The polypeptide is Probable RNA methyltransferase MXAN_6459 (Myxococcus xanthus (strain DK1622)).